A 165-amino-acid chain; its full sequence is uncharacterized protein (165 aa).

An N-terminal signal peptide occupies residues 1–25; the sequence is MKRVLFSVIVFTAVGFTFCQSKAHA.

This is an uncharacterized protein from Bacillus subtilis (strain 168).